The primary structure comprises 290 residues: Eukaryotic translation initiation factor 3 subunit G (290 aa).

Over residues 1-12 (MADSKQSNRDWA) the composition is skewed to basic and acidic residues. Disordered regions lie at residues 1-30 (MADS…STDA) and 173-192 (AGET…ATGA). Positions 204–285 (PTLRVTSLSI…LILEVAWSQP (82 aa)) constitute an RRM domain.

The protein belongs to the eIF-3 subunit G family. Component of the eukaryotic translation initiation factor 3 (eIF-3) complex.

It localises to the cytoplasm. RNA-binding component of the eukaryotic translation initiation factor 3 (eIF-3) complex, which is involved in protein synthesis of a specialized repertoire of mRNAs and, together with other initiation factors, stimulates binding of mRNA and methionyl-tRNAi to the 40S ribosome. The eIF-3 complex specifically targets and initiates translation of a subset of mRNAs involved in cell proliferation. This subunit can bind 18S rRNA. This Cryptococcus neoformans var. neoformans serotype D (strain B-3501A) (Filobasidiella neoformans) protein is Eukaryotic translation initiation factor 3 subunit G.